A 482-amino-acid polypeptide reads, in one-letter code: Programmed cell death protein 7 (482 aa).

Disordered regions lie at residues 1 to 136 (MALP…GDAA) and 151 to 170 (GNPRRPGGLRTPRTPAGPSL). A compositionally biased stretch (pro residues) spans 13-48 (GPPPPQPPPSAPFGCPPPPLPSPAFPPPLPQRPGPF). Over residues 49–71 (PGASAPFLQPPLALQPRAPAEAS) the composition is skewed to low complexity. 2 stretches are compositionally biased toward pro residues: residues 82-100 (PVPPPPLPPPPPQCRPFPG) and 109-130 (PPPPGPGPPWSPRWAEAPPPPD). Residues 151-168 (GNPRRPGGLRTPRTPAGP) show a composition bias toward low complexity. Residues 233 to 408 (EARRRLERVR…LQKREIESKL (176 aa)) are a coiled coil.

As to quaternary structure, interacts with RBM40. Component of the U11/U12 snRNPs that are part of the U12-type spliceosome. In terms of tissue distribution, highly expressed in testis, thymus and lymph nodes. Detected at low levels in embryonic stem cells.

Its subcellular location is the nucleus. Its function is as follows. Promotes apoptosis when overexpressed. The polypeptide is Programmed cell death protein 7 (Pdcd7) (Mus musculus (Mouse)).